The sequence spans 60 residues: DNA-directed RNA polymerase subunit Rpo6 (60 aa).

This sequence belongs to the archaeal Rpo6/eukaryotic RPB6 RNA polymerase subunit family. As to quaternary structure, part of the RNA polymerase complex.

The protein resides in the cytoplasm. The catalysed reaction is RNA(n) + a ribonucleoside 5'-triphosphate = RNA(n+1) + diphosphate. Functionally, DNA-dependent RNA polymerase (RNAP) catalyzes the transcription of DNA into RNA using the four ribonucleoside triphosphates as substrates. In Picrophilus torridus (strain ATCC 700027 / DSM 9790 / JCM 10055 / NBRC 100828 / KAW 2/3), this protein is DNA-directed RNA polymerase subunit Rpo6.